We begin with the raw amino-acid sequence, 465 residues long: Iron-sulfur cluster assembly SufBD family protein SH2035 (465 aa).

The protein belongs to the iron-sulfur cluster assembly SufBD family.

This is Iron-sulfur cluster assembly SufBD family protein SH2035 from Staphylococcus haemolyticus (strain JCSC1435).